Consider the following 174-residue polypeptide: Protein MOTHER of FT and TFL1 homolog 2 (174 aa).

Belongs to the phosphatidylethanolamine-binding protein family.

Its function is as follows. May form complexes with phosphorylated ligands by interfering with kinases and their effectors. In Oryza sativa subsp. japonica (Rice), this protein is Protein MOTHER of FT and TFL1 homolog 2.